Consider the following 536-residue polypeptide: MNDFWQHCSALLERELTPQQYVTWIKPLAPVAFDAAANTLSIAAPNRFKLDWVKSQFSGRISDLARDFWNAPIEVQFVLDPKVGQRSAAGAAPLAPRAPLPAANPAPVTAGPAPSGAADANAPAPAGMNAATAAAVAAVAAAQAAQAAQANAAALNADEAADLDLPSLTAHEAAAGRRTWRPGAASANSEAADSMYERSKLNPVLTFDNFVTGKANQLARAAAIQVADNPGISYNPLFLYGGVGLGKTHLIHAIGNQLLLDKPGARIRYIHAEQYVSDVVKAYQRKAFDDFKRYYHSLDLLLIDDIQFFSGKSRTQEEFFYAFEALVANKAQVIITSDTYPKEISGIDDRLISRFDSGLTVAIEPPELEMRVAILMRKAQSEGVSLSEDVAFFVAKHLRSNVRELEGALRKILAYSKFHGREITIELTKEALKDLLTVQNRQISVENIQKTVADFYNIKVADMYSKKRPANIARPRQIAMYLAKELTQKSLPEIGELFGGRDHTTVLHAVRKIADERGKDAQLNHELHVLEQTLKG.

Residues 1 to 72 (MNDFWQHCSA…DLARDFWNAP (72 aa)) are domain I, interacts with DnaA modulators. The segment at 72 to 199 (PIEVQFVLDP…EAADSMYERS (128 aa)) is domain II. Positions 97 to 121 (RAPLPAANPAPVTAGPAPSGAADAN) are disordered. A compositionally biased stretch (low complexity) spans 105–121 (PAPVTAGPAPSGAADAN). The segment at 200 to 416 (KLNPVLTFDN…GALRKILAYS (217 aa)) is domain III, AAA+ region. Gly244, Gly246, Lys247, and Thr248 together coordinate ATP. The tract at residues 417–536 (KFHGREITIE…LHVLEQTLKG (120 aa)) is domain IV, binds dsDNA.

Belongs to the DnaA family. In terms of assembly, oligomerizes as a right-handed, spiral filament on DNA at oriC.

The protein resides in the cytoplasm. Its function is as follows. Plays an essential role in the initiation and regulation of chromosomal replication. ATP-DnaA binds to the origin of replication (oriC) to initiate formation of the DNA replication initiation complex once per cell cycle. Binds the DnaA box (a 9 base pair repeat at the origin) and separates the double-stranded (ds)DNA. Forms a right-handed helical filament on oriC DNA; dsDNA binds to the exterior of the filament while single-stranded (ss)DNA is stabiized in the filament's interior. The ATP-DnaA-oriC complex binds and stabilizes one strand of the AT-rich DNA unwinding element (DUE), permitting loading of DNA polymerase. After initiation quickly degrades to an ADP-DnaA complex that is not apt for DNA replication. Binds acidic phospholipids. In Burkholderia thailandensis (strain ATCC 700388 / DSM 13276 / CCUG 48851 / CIP 106301 / E264), this protein is Chromosomal replication initiator protein DnaA.